The following is a 342-amino-acid chain: D-erythrose-4-phosphate dehydrogenase (342 aa).

NAD(+) is bound at residue 12 to 13; sequence RI. Residues 154–156, Arg-200, 213–214, and Arg-236 each bind substrate; these read SCT and TK. The Nucleophile role is filled by Cys-155. Asn-318 provides a ligand contact to NAD(+).

This sequence belongs to the glyceraldehyde-3-phosphate dehydrogenase family. Epd subfamily. Homotetramer.

The protein resides in the cytoplasm. It catalyses the reaction D-erythrose 4-phosphate + NAD(+) + H2O = 4-phospho-D-erythronate + NADH + 2 H(+). It functions in the pathway cofactor biosynthesis; pyridoxine 5'-phosphate biosynthesis; pyridoxine 5'-phosphate from D-erythrose 4-phosphate: step 1/5. Functionally, catalyzes the NAD-dependent conversion of D-erythrose 4-phosphate to 4-phosphoerythronate. This is D-erythrose-4-phosphate dehydrogenase from Salmonella arizonae (strain ATCC BAA-731 / CDC346-86 / RSK2980).